A 345-amino-acid chain; its full sequence is D-amino-acid oxidase (345 aa).

Positions 10, 13, 49, 53, and 55 each coordinate FAD. (R)-lactate is bound by residues Tyr230 and Arg290. Anthranilate is bound by residues Tyr230 and Arg290. Positions 290, 317, 320, 321, and 322 each coordinate FAD. The short motif at Ala343–Leu345 is the Microbody targeting signal element.

Belongs to the DAMOX/DASOX family. The cofactor is FAD.

The protein localises to the peroxisome matrix. The enzyme catalyses a D-alpha-amino acid + O2 + H2O = a 2-oxocarboxylate + H2O2 + NH4(+). It carries out the reaction D-methionine + O2 + H2O = 4-methylsulfanyl-2-oxobutanoate + H2O2 + NH4(+). Its function is as follows. Catalyzes the oxidative deamination of D-amino acids with broad substrate specificity. Enables the organism to utilize D-amino acids as a source of nutrients. Enables the organism to utilize D-alanine as a nitrogen source, although it is not strictly required for this process. Also enables utilization of D-alanine as a carbon source. The polypeptide is D-amino-acid oxidase (Candida boidinii (Yeast)).